A 306-amino-acid chain; its full sequence is Homoserine O-acetyltransferase (306 aa).

Catalysis depends on cysteine 142, which acts as the Acyl-thioester intermediate. Residues lysine 163 and serine 194 each coordinate substrate. The Proton acceptor role is filled by histidine 237. Residue glutamate 239 is part of the active site. Residue arginine 251 participates in substrate binding.

This sequence belongs to the MetA family.

It localises to the cytoplasm. The enzyme catalyses L-homoserine + acetyl-CoA = O-acetyl-L-homoserine + CoA. It functions in the pathway amino-acid biosynthesis; L-methionine biosynthesis via de novo pathway; O-acetyl-L-homoserine from L-homoserine: step 1/1. Transfers an acetyl group from acetyl-CoA to L-homoserine, forming acetyl-L-homoserine. In Clostridium tetani (strain Massachusetts / E88), this protein is Homoserine O-acetyltransferase.